The primary structure comprises 280 residues: Eukaryotic translation initiation factor 3 subunit F-1 (280 aa).

The MPN domain occupies 8–138 (VRVHPVVLFQ…LRAYICIQLG (131 aa)).

Belongs to the eIF-3 subunit F family. In terms of assembly, component of the eukaryotic translation initiation factor 3 (eIF-3) complex. The eIF-3 complex interacts with pix.

It is found in the cytoplasm. Its function is as follows. Component of the eukaryotic translation initiation factor 3 (eIF-3) complex, which is involved in protein synthesis of a specialized repertoire of mRNAs and, together with other initiation factors, stimulates binding of mRNA and methionyl-tRNAi to the 40S ribosome. The eIF-3 complex specifically targets and initiates translation of a subset of mRNAs involved in cell proliferation. The sequence is that of Eukaryotic translation initiation factor 3 subunit F-1 from Drosophila mojavensis (Fruit fly).